The chain runs to 106 residues: Circadian clock oscillator protein KaiB (106 aa).

This sequence belongs to the KaiB family. The KaiABC complex composition changes during the circadian cycle to control KaiC phosphorylation. Complexes KaiC(6), KaiA(2-4):KaiC(6), KaiB(6):KaiC(6) and KaiC(6):KaiB(6):KaiA(12) are among the most important forms, many form cooperatively. Undergoes a major conformational rearrangment; in the free state forms homotetramers as a dimer of dimers. When bound to the CI domain of KaiC switches to a monomeric thioredoxin-fold (KaiB(fs)). KaiB(fs) binds CikA, leading it to dephosphorylate phospho-RpaA.

In terms of biological role, key component of the KaiABC oscillator complex, which constitutes the main circadian regulator in cyanobacteria. Complex composition changes during the circadian cycle to control KaiC phosphorylation. KaiA stimulates KaiC autophosphorylation, while KaiB sequesters KaiA, leading to KaiC autodephosphorylation. Phospho-Ser-431 KaiC accumulation triggers binding of KaiB to form the KaiB(6):KaiC(6) complex, leading to changes in output regulators CikA and SasA. KaiB switches to a thioredoxin-like fold (KaiB(fs)) when bound to KaiC. KaiB(6):KaiC(6) formation exposes a site for KaiA binding that sequesters KaiA from KaiC, making the KaiC(6):KaiB(6):KaiA(12) complex that results in KaiC autodephosphorylation. Its function is as follows. A metamorphic protein which reversibly switches between an inactive tetrameric fold and a rare, thioredoxin-like monomeric fold (KaiB(fs)). KaiB(fs) binds phospho-KaiC, KaiA and CikA. KaiA and CikA compete for binding to KaiB(fs), and KaiB(fs) and SasA compete for binding to KaiC, thus the clock oscillator and output signal pathway are tightly coupled. This chain is Circadian clock oscillator protein KaiB, found in Gloeothece citriformis (strain PCC 7424) (Cyanothece sp. (strain PCC 7424)).